Consider the following 54-residue polypeptide: Ferredoxin (54 aa).

4Fe-4S ferredoxin-type domains lie at 2–25 (YVINDSCIACGACKPECPVNIQQG) and 26–54 (SIYAIDADSCIDCGSCASVCPVGAPNPED). Residues Cys8, Cys11, Cys14, Cys18, Cys35, Cys38, Cys41, and Cys45 each contribute to the [4Fe-4S] cluster site.

[4Fe-4S] cluster serves as cofactor.

Ferredoxins are iron-sulfur proteins that transfer electrons in a wide variety of metabolic reactions. The chain is Ferredoxin from Peptoniphilus asaccharolyticus (Peptostreptococcus asaccharolyticus).